The following is a 268-amino-acid chain: Movement and silencing protein TGBp1 (268 aa).

The (+)RNA virus helicase ATP-binding domain maps to 1 to 138 (MEDFFNCLRS…PHHIAQAITQ (138 aa)). The (+)RNA virus helicase C-terminal domain maps to 139–268 (YTGFPIEAAG…CRPRDLPSEN (130 aa)).

Belongs to the Tymovirales TGBp1 protein family. In terms of assembly, homodimer and homooligomer. Interacts with capsid protein. Interacts with host AGO1; this interaction targets the host protein for degradation, thereby suppressing the antiviral RNA silencing.

It localises to the host cytoplasm. Functionally, transports viral genome to neighboring plant cells directly through plasmosdesmata, without any budding. The movement protein allows efficient cell to cell propagation, by bypassing the host cell wall barrier. Increases plasmodesma size exclusion limit. Acts as a suppressor of RNA-mediated gene silencing, also known as post-transcriptional gene silencing (PTGS), a mechanism of plant viral defense that limits the accumulation of viral RNAs. The sequence is that of Movement and silencing protein TGBp1 (ORF2) from Lolium latent virus (isolate Lolium/USA/US1/-) (LoLV).